A 554-amino-acid chain; its full sequence is (E)-beta-caryophyllene synthase (554 aa).

Positions 313 and 317 each coordinate Mn(2+). The DDXXD motif motif lies at 313-317 (DDIYD). 2 homodimerization regions span residues 319–325 (YGTLDEL) and 391–427 (EAQW…LAVI). D457 and E465 together coordinate Mn(2+).

This sequence belongs to the terpene synthase family. As to quaternary structure, homodimer. The cofactor is Mn(2+). Mg(2+) is required as a cofactor. Expressed in peltate glandular trichomes. Present at low levels in flowers, leaves and stems.

It catalyses the reaction (2E,6E)-farnesyl diphosphate = (-)-(E)-beta-caryophyllene + diphosphate. It carries out the reaction (2E,6E)-farnesyl diphosphate = alpha-humulene + diphosphate. Its pathway is secondary metabolite biosynthesis; terpenoid biosynthesis. In terms of biological role, involved in the biosynthesis of phenolic sesquiterpenes natural products. Sesquiterpene synthase converting (2E,6E)-farnesyl diphosphate (FPP) to (E)-beta-caryophyllene and alpha-humulene. The sequence is that of (E)-beta-caryophyllene synthase from Origanum vulgare (Wild marjoram).